The sequence spans 312 residues: Olfactory receptor 2M5 (312 aa).

Residues 1 to 25 (MAWENQTFNSDFILLGIFNHSPTHT) are Extracellular-facing. N-linked (GlcNAc...) asparagine glycosylation occurs at N5. A helical membrane pass occupies residues 26 to 49 (FLFFLVLAIFSVAFMGNSVMVLLI). At 50–57 (YLDTQLHT) the chain is on the cytoplasmic side. Residues 58-79 (PMYFLLSQLFLMDLMLICSTVP) form a helical membrane-spanning segment. The Extracellular portion of the chain corresponds to 80 to 100 (KMAFNYLSGSKSISMAGCATQ). An intrachain disulfide couples C97 to C189. Residues 101 to 120 (IFFYVSLLGSECFLLAVMSY) form a helical membrane-spanning segment. At 121 to 139 (DRYIAICHPLRYTNLMRPK) the chain is on the cytoplasmic side. Residues 140-158 (ICGLMTAFSWILGSMDAII) form a helical membrane-spanning segment. The Extracellular portion of the chain corresponds to 159–195 (DAVATFSFSYCGSREIAHFFCDFPSLLILSCNDTSIF). The helical transmembrane segment at 196–219 (EKVLFICCIVMIVFPVAIIIASYA) threads the bilayer. Residues 220 to 236 (RVILAVIHMGSGEGRRK) lie on the Cytoplasmic side of the membrane. The helical transmembrane segment at 237–259 (AFTTCSSHLMVVGMYYGAGLFMY) threads the bilayer. Topologically, residues 260–272 (IRPTSDRSPMQDK) are extracellular. The helical transmembrane segment at 273–292 (LVSVFYTILTPMLNPLIYSL) threads the bilayer. Residues 293-311 (RNKEVTRALRKVLGKGKCG) lie on the Cytoplasmic side of the membrane.

Belongs to the G-protein coupled receptor 1 family.

It localises to the cell membrane. Odorant receptor. The chain is Olfactory receptor 2M5 (OR2M5) from Homo sapiens (Human).